The primary structure comprises 92 residues: Evasin P675 (92 aa).

The N-terminal stretch at 1–24 is a signal peptide; it reads MEVKTFAFLQIAVIIALGLHLAPA. 3 cysteine pairs are disulfide-bonded: cysteine 44–cysteine 63, cysteine 48–cysteine 65, and cysteine 59–cysteine 76. The N-linked (GlcNAc...) asparagine glycan is linked to asparagine 47. An N-linked (GlcNAc...) asparagine glycan is attached at asparagine 70.

The protein resides in the secreted. Salivary chemokine-binding protein which binds to host chemokines CXCL1, CXCL2, CXCL3, CXCL4, CXCL5, CXCL6, CXCL10, CXCL11 and CXCL13. The protein is Evasin P675 of Ixodes ricinus (Common tick).